A 178-amino-acid polypeptide reads, in one-letter code: Large ribosomal subunit protein uL6 (178 aa).

This sequence belongs to the universal ribosomal protein uL6 family. As to quaternary structure, part of the 50S ribosomal subunit.

This protein binds to the 23S rRNA, and is important in its secondary structure. It is located near the subunit interface in the base of the L7/L12 stalk, and near the tRNA binding site of the peptidyltransferase center. The chain is Large ribosomal subunit protein uL6 from Francisella tularensis subsp. holarctica (strain FTNF002-00 / FTA).